A 485-amino-acid polypeptide reads, in one-letter code: Pyruvate kinase (485 aa).

Arg33 lines the substrate pocket. The K(+) site is built by Asn35, Ser37, Asp67, and Thr68. 35–38 (NFSH) lines the ATP pocket. Residues Arg74 and Lys155 each contribute to the ATP site. Glu221 contacts Mg(2+). Substrate-binding residues include Gly244, Asp245, and Thr277. A Mg(2+)-binding site is contributed by Asp245.

Belongs to the pyruvate kinase family. In terms of assembly, homotetramer. Mg(2+) is required as a cofactor. Requires K(+) as cofactor.

The catalysed reaction is pyruvate + ATP = phosphoenolpyruvate + ADP + H(+). It functions in the pathway carbohydrate degradation; glycolysis; pyruvate from D-glyceraldehyde 3-phosphate: step 5/5. The protein is Pyruvate kinase (pyk) of Chlamydia trachomatis serovar D (strain ATCC VR-885 / DSM 19411 / UW-3/Cx).